Reading from the N-terminus, the 189-residue chain is Peptidyl-tRNA hydrolase (189 aa).

A tRNA-binding site is contributed by Tyr15. The Proton acceptor role is filled by His20. The tRNA site is built by Phe66, Asn68, and Asn114.

It belongs to the PTH family. As to quaternary structure, monomer.

It localises to the cytoplasm. It catalyses the reaction an N-acyl-L-alpha-aminoacyl-tRNA + H2O = an N-acyl-L-amino acid + a tRNA + H(+). Its function is as follows. Hydrolyzes ribosome-free peptidyl-tRNAs (with 1 or more amino acids incorporated), which drop off the ribosome during protein synthesis, or as a result of ribosome stalling. Functionally, catalyzes the release of premature peptidyl moieties from peptidyl-tRNA molecules trapped in stalled 50S ribosomal subunits, and thus maintains levels of free tRNAs and 50S ribosomes. The sequence is that of Peptidyl-tRNA hydrolase from Streptococcus sanguinis (strain SK36).